The sequence spans 92 residues: Large ribosomal subunit protein eL43 (92 aa).

The C4-type zinc-finger motif lies at Cys39–Cys60.

Belongs to the eukaryotic ribosomal protein eL43 family.

This chain is Large ribosomal subunit protein eL43 (RPL37A), found in Cryptochiton stelleri (Giant gumboot chiton).